Reading from the N-terminus, the 229-residue chain is Dolichyldiphosphatase 1 (229 aa).

4 consecutive transmembrane segments (helical) span residues 27–47 (LFNA…ITLI), 94–114 (MPSS…LFYL), 120–140 (FGSK…AAGV), and 156–176 (FCGS…IEYI).

It belongs to the dolichyldiphosphatase family.

The protein resides in the endoplasmic reticulum membrane. The catalysed reaction is a di-trans,poly-cis-dolichyl diphosphate + H2O = a di-trans,poly-cis-dolichyl phosphate + phosphate + H(+). It participates in protein modification; protein glycosylation. Required for efficient N-glycosylation. Necessary for maintaining optimal levels of dolichol-linked oligosaccharides. Hydrolyzes dolichyl pyrophosphate at a very high rate and dolichyl monophosphate at a much lower rate. Does not act on phosphatidate. The chain is Dolichyldiphosphatase 1 (dolpp1) from Dictyostelium discoideum (Social amoeba).